Consider the following 495-residue polypeptide: RNA-binding KH domain-containing protein PEPPER (495 aa).

KH domains follow at residues 73-140 (DCVF…MDAV), 165-234 (FSSV…LEAI), and 340-403 (QVSQ…EQLI). The segment at 474–495 (GQTYGSEYRPASDVGGYSSYNL) is disordered.

In terms of assembly, interacts with HUA1 and HEN4. As to expression, detected in roots, shoots, leaves, flowers and fruits.

It is found in the nucleus. In terms of biological role, regulates vegetative and gynoecium development. In concert with HUA2, antagonizes FLK by positively regulating FLC probably at transcriptional and post-transcriptional levels, and thus acts as a negative regulator of flowering. This Arabidopsis thaliana (Mouse-ear cress) protein is RNA-binding KH domain-containing protein PEPPER.